The sequence spans 728 residues: Phomopsene synthase (728 aa).

A terpene cyclase region spans residues 1–327 (MEYRYSYVID…PRYHSDQSLD (327 aa)). The Mg(2+) site is built by aspartate 94 and aspartate 98. Substrate contacts are provided by residues aspartate 94, aspartate 98, 181–184 (RIVD), asparagine 226, 230–234 (SWEKE), and 319–320 (RY). Positions 94–98 (DDLVD) match the DDXXD 1 motif. The NSE/DTE motif lies at 226–234 (NDVQSWEKE). Residues 328–728 (EMMVARMKYG…FRFLLSLLKV (401 aa)) are prenyltransferase. Positions 352-363 (ENRGTKRTHQDD) are enriched in basic and acidic residues. Positions 352–379 (ENRGTKRTHQDDTEGVQSVKRFNGASTK) are disordered. A run of 3 repeats spans residues 381–386 (GINGTN), 387–392 (GINGLN), and 393–398 (GINGSN). The 3 X 6 AA approximate tandem repeats stretch occupies residues 381–398 (GINGTNGINGLNGINGSN). Residues lysine 447, arginine 450, and histidine 479 each coordinate isopentenyl diphosphate. The Mg(2+) site is built by aspartate 486 and aspartate 490. A DDXXD 2 motif is present at residues 486 to 490 (DDVQD). A dimethylallyl diphosphate-binding site is contributed by arginine 495. Position 496 (arginine 496) interacts with isopentenyl diphosphate. Dimethylallyl diphosphate is bound by residues lysine 574, threonine 575, glutamine 610, asparagine 617, lysine 627, and lysine 637.

In the N-terminal section; belongs to the terpene synthase family. This sequence in the C-terminal section; belongs to the FPP/GGPP synthase family. Hexamer. Mg(2+) is required as a cofactor.

It carries out the reaction isopentenyl diphosphate + (2E,6E)-farnesyl diphosphate = (2E,6E,10E)-geranylgeranyl diphosphate + diphosphate. Its pathway is secondary metabolite biosynthesis; terpenoid biosynthesis. In terms of biological role, bifunctional terpene synthase; part of the gene cluster that mediates the biosynthesis of the diterpene methyl phomopsenonate. At first, the universal precursor of diterpene, geranylgeranyl diphosphate (GGPP) is provided and is cyclized by the unusual bifunctional terpene synthase PaPS to give phomopsene. The C-terminal prenyltransferase domain of PaPS catalyzes formation of GGPP, whereas the N-terminal terpene cyclase domain catalyzes the cyclization of GGPP to phomopsene. Since the oxidation of a methylgroup to a carboxyl group is frequently catalyzed by a cytochrome P450 monooxygenase, the C-16 methyl group would be oxidized by the cluster-specific cytochrome P450 monooxygenase ORF3. Subsequently, oxidation of the allylic position and methylation of the carboxyl group may give methyl phomopsenonate. Although further study is necessary to identify genes such as a monooxygenase and a methyltransferase, the predicted functions of genes on the cluster are correlated with the structure of methyl phomopsenonate. This chain is Phomopsene synthase, found in Phomopsis amygdali (Fusicoccum amygdali).